Reading from the N-terminus, the 331-residue chain is Adenine deaminase (331 aa).

Residues H17, H19, and H197 each contribute to the Zn(2+) site. E200 serves as the catalytic Proton donor. D278 is a binding site for Zn(2+). D279 is a binding site for substrate.

The protein belongs to the metallo-dependent hydrolases superfamily. Adenosine and AMP deaminases family. Adenine deaminase type 2 subfamily. Requires Zn(2+) as cofactor.

It carries out the reaction adenine + H2O + H(+) = hypoxanthine + NH4(+). Its function is as follows. Catalyzes the hydrolytic deamination of adenine to hypoxanthine. Plays an important role in the purine salvage pathway and in nitrogen catabolism. This chain is Adenine deaminase, found in Wolinella succinogenes (strain ATCC 29543 / DSM 1740 / CCUG 13145 / JCM 31913 / LMG 7466 / NCTC 11488 / FDC 602W) (Vibrio succinogenes).